The chain runs to 620 residues: MDSHTLIQALIYLGSAALIVPIAVRLGLGSVLGYLIAGCIIGPWGLRLVTDAESILHFAEIGVVLMLFIIGLELDPQRLWKLRAAVFGGGALQMVICGGLLGLFCMLLGLRWQVAELIGMTLALSSTAIAMQAMNERNLMVTQMGRSAFAVLLFQDIAAIPLVAMIPLLVASSASTTMGAFALSALKVAGALVLVVLLGRYVTRPALRFVARSGLREVFSAVALFLVFGFGLLLEEVGLSMAMGAFLAGVLLASSEYRHALESDIEPFKGLLLGLFFIGVGMSIDFGTLLENPLRIVILLLGFLIIKIAMLWLIARPLQVPNKQRRWFAVLLGQGSEFAFVVFGAAQMANVLEPEWAKSLTLAVALSMAATPILLVILNRLEQSSTEEAREADEIDEEQPRVIIAGFGRFGQITGRLLLSSGVKMVVLDHDPDHIETLRKFGMKVFYGDATRMDLLESAGAAKAEVLINAIDDPQTNLQLTEMVKEHFPHLQIIARARDVDHYIRLRQAGVEKPERETFEGALKTGRLALESLGLGPYEARERADVFRRFNIQMVEEMAMVENDTKARAAVYKRTSAMLSEIITEDREHLSLIQRHGWQGTEEGKHTGNMADEPETKPSS.

12 helical membrane passes run 4–24 (HTLI…PIAV), 26–46 (LGLG…PWGL), 54–74 (SILH…GLEL), 90–110 (GALQ…LLGL), 114–134 (VAEL…MQAM), 149–169 (FAVL…IPLL), 178–198 (MGAF…VVLL), 218–238 (VFSA…EEVG), 270–290 (GLLL…GTLL), 294–314 (LRIV…LWLI), 327–347 (WFAV…GAAQ), and 359–379 (SLTL…VILN). One can recognise an RCK N-terminal domain in the interval 399–518 (QPRVIIAGFG…AGVEKPERET (120 aa)). The interval 597–620 (GWQGTEEGKHTGNMADEPETKPSS) is disordered.

Belongs to the monovalent cation:proton antiporter 2 (CPA2) transporter (TC 2.A.37) family. KefC subfamily. Homodimer. Interacts with the regulatory subunit KefF.

Its subcellular location is the cell inner membrane. Functionally, pore-forming subunit of a potassium efflux system that confers protection against electrophiles. Catalyzes K(+)/H(+) antiport. The chain is Glutathione-regulated potassium-efflux system protein KefC from Escherichia coli O7:K1 (strain IAI39 / ExPEC).